A 393-amino-acid chain; its full sequence is Putative bacilysin exporter BacE (393 aa).

10 helical membrane-spanning segments follow: residues leucine 11–isoleucine 31, serine 43–valine 63, valine 69–leucine 89, glycine 92–phenylalanine 112, leucine 133–glycine 155, leucine 160–serine 177, methionine 215–valine 235, isoleucine 244–valine 264, alanine 287–isoleucine 307, and isoleucine 353–histidine 373.

It belongs to the major facilitator superfamily.

It is found in the cell membrane. In terms of biological role, part of the bacilysin biosynthesis operon. May be involved in self-resistance to bacilysin by permitting efflux of this antibiotic. This Bacillus subtilis protein is Putative bacilysin exporter BacE (bacE).